The sequence spans 545 residues: Prolyl 3-hydroxylase OGFOD1 (545 aa).

The tract at residues 1 to 23 is disordered; sequence MNGKRPADPGPARPMKKGKKQVS. The Fe2OG dioxygenase domain maps to 137-239; that stretch reads PTIDMSCAKY…RLSISGWFYG (103 aa). The Fe cation site is built by histidine 155 and aspartate 157. Tyrosine 169 contacts 2-oxoglutarate. Position 218 (histidine 218) interacts with Fe cation. Residue arginine 230 participates in 2-oxoglutarate binding. Over residues 371-380 the composition is skewed to acidic residues; that stretch reads SEDDETEEKG. A disordered region spans residues 371-437; sequence SEDDETEEKG…EAKKESSVPM (67 aa). Over residues 383–393 the composition is skewed to low complexity; sequence ETASAAAGTEE. Residues 402–417 are compositionally biased toward polar residues; the sequence is PENNQVAAGSHSQENG.

Belongs to the TPA1 family. In terms of assembly, monomer. It depends on Fe(2+) as a cofactor. The cofactor is L-ascorbate.

It is found in the cytoplasm. The protein localises to the nucleus. The enzyme catalyses [ribosomal protein uS12]-L-proline + 2-oxoglutarate + O2 = [ribosomal protein uS12]-(3S)-3-hydroxy-L-proline + succinate + CO2. Prolyl 3-hydroxylase that catalyzes 3-hydroxylation of 'Pro-62' of small ribosomal subunit uS12 (RPS23), thereby regulating protein translation termination efficiency. Involved in stress granule formation. This Mus musculus (Mouse) protein is Prolyl 3-hydroxylase OGFOD1 (Ogfod1).